The primary structure comprises 462 residues: UDP-N-acetylmuramoylalanine--D-glutamate ligase (462 aa).

Position 125–131 (125–131 (GSDGKTT)) interacts with ATP.

Belongs to the MurCDEF family.

The protein localises to the cytoplasm. It catalyses the reaction UDP-N-acetyl-alpha-D-muramoyl-L-alanine + D-glutamate + ATP = UDP-N-acetyl-alpha-D-muramoyl-L-alanyl-D-glutamate + ADP + phosphate + H(+). Its pathway is cell wall biogenesis; peptidoglycan biosynthesis. In terms of biological role, cell wall formation. Catalyzes the addition of glutamate to the nucleotide precursor UDP-N-acetylmuramoyl-L-alanine (UMA). The polypeptide is UDP-N-acetylmuramoylalanine--D-glutamate ligase (Clostridium acetobutylicum (strain ATCC 824 / DSM 792 / JCM 1419 / IAM 19013 / LMG 5710 / NBRC 13948 / NRRL B-527 / VKM B-1787 / 2291 / W)).